A 237-amino-acid polypeptide reads, in one-letter code: Class B acid phosphatase (237 aa).

The first 25 residues, 1-25, serve as a signal peptide directing secretion; it reads MRKLTLAFAAASLLFTLNSAVVARA. Catalysis depends on Asp-69, which acts as the Nucleophile. Mg(2+) contacts are provided by Asp-69 and Asp-71. The Proton donor role is filled by Asp-71. Substrate is bound by residues 137–138 and Lys-177; that span reads TG. Mg(2+) is bound at residue Asp-192.

The protein belongs to the class B bacterial acid phosphatase family. As to quaternary structure, homotetramer. The cofactor is Mg(2+).

Its subcellular location is the periplasm. It carries out the reaction a phosphate monoester + H2O = an alcohol + phosphate. In terms of biological role, dephosphorylates several organic phosphate monoesters. Also has a phosphotransferase activity catalyzing the transfer of low-energy phosphate groups from organic phosphate monoesters to free hydroxyl groups of various organic compounds. The chain is Class B acid phosphatase from Klebsiella pneumoniae (strain 342).